The sequence spans 161 residues: Nucleotide-binding protein Shew185_3601 (161 aa).

It belongs to the YajQ family.

Nucleotide-binding protein. This Shewanella baltica (strain OS185) protein is Nucleotide-binding protein Shew185_3601.